The primary structure comprises 466 residues: Glutamate--tRNA ligase 1 (466 aa).

The 'HIGH' region signature appears at 9-19 (PSPTGYLHIGG). Cys98, Cys100, Cys125, and Glu127 together coordinate Zn(2+). The 'KMSKS' region motif lies at 236-240 (KLSKR). Lys239 is a binding site for ATP.

The protein belongs to the class-I aminoacyl-tRNA synthetase family. Glutamate--tRNA ligase type 1 subfamily. In terms of assembly, monomer. Requires Zn(2+) as cofactor.

The protein localises to the cytoplasm. It catalyses the reaction tRNA(Glu) + L-glutamate + ATP = L-glutamyl-tRNA(Glu) + AMP + diphosphate. Functionally, catalyzes the attachment of glutamate to tRNA(Glu) in a two-step reaction: glutamate is first activated by ATP to form Glu-AMP and then transferred to the acceptor end of tRNA(Glu). The polypeptide is Glutamate--tRNA ligase 1 (Acidithiobacillus ferrooxidans (strain ATCC 53993 / BNL-5-31) (Leptospirillum ferrooxidans (ATCC 53993))).